The following is an 842-amino-acid chain: Glycogen phosphorylase, muscle form (842 aa).

Residue Ser-2 is modified to N-acetylserine. At Ser-15 the chain carries Phosphoserine; by PHK; in form phosphorylase A. AMP is bound by residues Asp-43 and Tyr-76. Tyr-204 and Tyr-227 each carry phosphotyrosine. 310–319 (RRFKSSKFGC) contributes to the AMP binding site. Ser-430 is subject to Phosphoserine. Tyr-473 is subject to Phosphotyrosine. Ser-514 carries the post-translational modification Phosphoserine. Lys-681 is modified (N6-(pyridoxal phosphate)lysine). Residues Ser-747 and Ser-748 each carry the phosphoserine modification.

The protein belongs to the glycogen phosphorylase family. Homodimer. Homotetramer; to form the enzymatically active phosphorylase A. Pyridoxal 5'-phosphate is required as a cofactor. Post-translationally, phosphorylation of Ser-15 converts phosphorylase B (unphosphorylated) to phosphorylase A.

The enzyme catalyses [(1-&gt;4)-alpha-D-glucosyl](n) + phosphate = [(1-&gt;4)-alpha-D-glucosyl](n-1) + alpha-D-glucose 1-phosphate. Allosterically regulated through the non-covalent binding of metabolites, being activated by AMP and inhibited by ATP, ADP, and glucose-6-phosphate. The activity is also controlled by post-translational modifications including phosphorylation. Its function is as follows. Allosteric enzyme that catalyzes the rate-limiting step in glycogen catabolism, the phosphorolytic cleavage of glycogen to produce glucose-1-phosphate, and plays a central role in maintaining cellular and organismal glucose homeostasis. In Macaca fascicularis (Crab-eating macaque), this protein is Glycogen phosphorylase, muscle form.